Consider the following 314-residue polypeptide: Mitochondrial 2-oxoglutarate/malate carrier protein (314 aa).

Alanine 2 carries the post-translational modification N-acetylalanine. Residue serine 6 is modified to Phosphoserine. 3 Solcar repeats span residues 23 to 108 (VKFL…LFER), 117 to 208 (PGFL…SKQF), and 217 to 306 (DNIL…MNKA). Residues 24–42 (KFLFGGLAGMGATVFVQPL) traverse the membrane as a helical segment. The residue at position 57 (lysine 57) is an N6-succinyllysine. An N6-acetyllysine modification is found at lysine 73. A helical transmembrane segment spans residues 83-101 (GLSAGLLRQATYTTTRLGI). Tyrosine 102 is modified (phosphotyrosine). The next 3 membrane-spanning stretches (helical) occupy residues 119 to 140 (FLLK…GTPA), 183 to 202 (GCIP…LASY), and 222 to 240 (HFCA…SMPV). An N6-acetyllysine modification is found at lysine 256. Residues 281–300 (GFTPYYARLGPHTVLTFIFL) traverse the membrane as a helical segment.

The protein belongs to the mitochondrial carrier (TC 2.A.29) family. Interacts with SMIM26.

It localises to the mitochondrion inner membrane. It catalyses the reaction (S)-malate(in) + 2-oxoglutarate(out) = (S)-malate(out) + 2-oxoglutarate(in). It carries out the reaction malonate(in) + 2-oxoglutarate(out) = malonate(out) + 2-oxoglutarate(in). The catalysed reaction is succinate(in) + 2-oxoglutarate(out) = succinate(out) + 2-oxoglutarate(in). The enzyme catalyses maleate(in) + 2-oxoglutarate(out) = maleate(out) + 2-oxoglutarate(in). It catalyses the reaction oxaloacetate(in) + 2-oxoglutarate(out) = oxaloacetate(out) + 2-oxoglutarate(in). Functionally, catalyzes the transport of 2-oxoglutarate (alpha-oxoglutarate) across the inner mitochondrial membrane in an electroneutral exchange for malate. Can also exchange 2-oxoglutarate for other dicarboxylic acids such as malonate, succinate, maleate and oxaloacetate, although with lower affinity. Contributes to several metabolic processes, including the malate-aspartate shuttle, the oxoglutarate/isocitrate shuttle, in gluconeogenesis from lactate, and in nitrogen metabolism. Maintains mitochondrial fusion and fission events, and the organization and morphology of cristae. Involved in the regulation of apoptosis. Helps protect from cytotoxic-induced apoptosis by modulating glutathione levels in mitochondria. The protein is Mitochondrial 2-oxoglutarate/malate carrier protein (Slc25a11) of Mus musculus (Mouse).